The following is a 244-amino-acid chain: Orotidine 5'-phosphate decarboxylase (244 aa).

Residues D10, K32, 59–68, T122, R184, Q193, G213, and R214 each bind substrate; that span reads DLKLHDIPNT. The Proton donor role is filled by K61.

Belongs to the OMP decarboxylase family. Type 1 subfamily. In terms of assembly, homodimer.

It carries out the reaction orotidine 5'-phosphate + H(+) = UMP + CO2. Its pathway is pyrimidine metabolism; UMP biosynthesis via de novo pathway; UMP from orotate: step 2/2. In terms of biological role, catalyzes the decarboxylation of orotidine 5'-monophosphate (OMP) to uridine 5'-monophosphate (UMP). This is Orotidine 5'-phosphate decarboxylase from Bacillus caldolyticus.